The chain runs to 495 residues: Siroheme synthase 2 (495 aa).

A precorrin-2 dehydrogenase /sirohydrochlorin ferrochelatase region spans residues 1–205 (MDHYPIFLNL…GREREAEQAM (205 aa)). NAD(+) is bound by residues 22 to 23 (ET) and 43 to 44 (PD). A Phosphoserine modification is found at Ser-130. The tract at residues 220-495 (GEVYLVGAGP…HPAPADTEQA (276 aa)) is uroporphyrinogen-III C-methyltransferase. Position 229 (Pro-229) interacts with S-adenosyl-L-methionine. Catalysis depends on Asp-252, which acts as the Proton acceptor. Lys-274 serves as the catalytic Proton donor. S-adenosyl-L-methionine is bound by residues 305–307 (GGD), Ile-310, 335–336 (TA), Met-387, and Ala-416. The segment at 471–495 (FPEHGCLRGEPRPTRHPAPADTEQA) is disordered.

This sequence in the N-terminal section; belongs to the precorrin-2 dehydrogenase / sirohydrochlorin ferrochelatase family. In the C-terminal section; belongs to the precorrin methyltransferase family.

It catalyses the reaction uroporphyrinogen III + 2 S-adenosyl-L-methionine = precorrin-2 + 2 S-adenosyl-L-homocysteine + H(+). The catalysed reaction is precorrin-2 + NAD(+) = sirohydrochlorin + NADH + 2 H(+). It carries out the reaction siroheme + 2 H(+) = sirohydrochlorin + Fe(2+). It functions in the pathway cofactor biosynthesis; adenosylcobalamin biosynthesis; precorrin-2 from uroporphyrinogen III: step 1/1. The protein operates within cofactor biosynthesis; adenosylcobalamin biosynthesis; sirohydrochlorin from precorrin-2: step 1/1. Its pathway is porphyrin-containing compound metabolism; siroheme biosynthesis; precorrin-2 from uroporphyrinogen III: step 1/1. It participates in porphyrin-containing compound metabolism; siroheme biosynthesis; siroheme from sirohydrochlorin: step 1/1. It functions in the pathway porphyrin-containing compound metabolism; siroheme biosynthesis; sirohydrochlorin from precorrin-2: step 1/1. Multifunctional enzyme that catalyzes the SAM-dependent methylations of uroporphyrinogen III at position C-2 and C-7 to form precorrin-2 via precorrin-1. Then it catalyzes the NAD-dependent ring dehydrogenation of precorrin-2 to yield sirohydrochlorin. Finally, it catalyzes the ferrochelation of sirohydrochlorin to yield siroheme. This chain is Siroheme synthase 2, found in Halorhodospira halophila (strain DSM 244 / SL1) (Ectothiorhodospira halophila (strain DSM 244 / SL1)).